A 221-amino-acid polypeptide reads, in one-letter code: PKHD-type hydroxylase A9601_13531 (221 aa).

Residues 80 to 174 enclose the Fe2OG dioxygenase domain; that stretch reads LIHGIMFTKS…RIVCVGWIES (95 aa). Fe cation contacts are provided by His-98, Asp-100, and His-155. 2-oxoglutarate is bound at residue Arg-165.

It depends on Fe(2+) as a cofactor. L-ascorbate is required as a cofactor.

The chain is PKHD-type hydroxylase A9601_13531 from Prochlorococcus marinus (strain AS9601).